Here is a 590-residue protein sequence, read N- to C-terminus: Guanylate-binding protein 5 (590 aa).

Positions 1–306 (MAPEIHMPEP…LTYVDAINSG (306 aa)) are NLRP3-binding. The interval 1–310 (MAPEIHMPEP…DAINSGALPS (310 aa)) is GTPase domain (Globular). Positions 35–277 (TQPVVVVAIV…FCSHIFTQSK (243 aa)) constitute a GB1/RHD3-type G domain. Residues 45-52 (GLYRTGKS), 67-69 (VGS), 182-183 (RD), and leucine 246 each bind GTP. The segment at 529-590 (QIALEKARVA…RRHHHDCVIS (62 aa)) is required for tetramerization, but not for dimerization. Cysteine methyl ester is present on cysteine 587. Cysteine 587 carries S-geranylgeranyl cysteine lipidation. A propeptide spans 588–590 (VIS) (removed in mature form).

This sequence belongs to the TRAFAC class dynamin-like GTPase superfamily. GB1/RHD3 GTPase family. GB1 subfamily. In terms of assembly, homodimer; homodimerizes upon GTP-binding, forming a close face-to-face dimer. Heterodimer with other family members, including GBP1, GBP2, GBP3 and GBP4. May also form tetramers (dimer of dimers) in the presence of GTP. Interacts with NLRP3, possibly in its tetrameric form, and promotes PYCARD/ASC polymerization. Post-translationally, isoprenylation is required for proper subcellular location. Low expression, if any, in many tissues in the absence of stimulation.

It is found in the cytoplasmic vesicle membrane. The protein localises to the golgi apparatus membrane. Its subcellular location is the cytoplasm. The enzyme catalyses GTP + H2O = GDP + phosphate + H(+). Functionally, interferon (IFN)-inducible GTPase that plays important roles in innate immunity against a diverse range of bacterial, viral and protozoan pathogens. Hydrolyzes GTP, but in contrast to other family members, does not produce GMP. Following infection, recruited to the pathogen-containing vacuoles or vacuole-escaped bacteria and acts as a positive regulator of inflammasome assembly by promoting the release of inflammasome ligands from bacteria. Acts by promoting lysis of pathogen-containing vacuoles, releasing pathogens into the cytosol. Following pathogen release in the cytosol, promotes recruitment of proteins that mediate bacterial cytolysis, such as Gm12250/Irgb10: this liberates ligands that are detected by inflammasomes, such as lipopolysaccharide (LPS) that activates the non-canonical CASP4/CASP11 inflammasome or double-stranded DNA (dsDNA) that activates the AIM2 inflammasome. As an activator of NLRP3 inflammasome assembly: promotes selective NLRP3 inflammasome assembly in response to microbial and soluble, but not crystalline, agents. Independently of its GTPase activity, acts as an inhibitor of various viruses infectivity by inhibiting FURIN-mediated maturation of viral envelope proteins. The protein is Guanylate-binding protein 5 of Mus musculus (Mouse).